Here is a 486-residue protein sequence, read N- to C-terminus: Arginine deiminase (486 aa).

Catalysis depends on Cys-476, which acts as the Amidino-cysteine intermediate.

It belongs to the arginine deiminase family.

The protein localises to the cytoplasm. The enzyme catalyses L-arginine + H2O = L-citrulline + NH4(+). The protein operates within amino-acid degradation; L-arginine degradation via ADI pathway; carbamoyl phosphate from L-arginine: step 1/2. In terms of biological role, involved in the arginine deiminase pathway of fermentative arginine utilization. This chain is Arginine deiminase (arcA), found in Halobacterium salinarum (strain ATCC 29341 / DSM 671 / R1).